The primary structure comprises 191 residues: Protein RER1A (191 aa).

M1 carries the post-translational modification N-acetylmethionine. Helical transmembrane passes span 39-57, 60-80, 115-135, and 136-156; these read YRWI…RVYY, GFYI…IGFL, FKFW…TFFS, and VFDV…LFVL.

It belongs to the RER1 family.

The protein localises to the membrane. Involved in the retrieval of endoplasmic reticulum membrane proteins from the early Golgi compartment. This chain is Protein RER1A (RER1A), found in Arabidopsis thaliana (Mouse-ear cress).